The sequence spans 359 residues: 3-isopropylmalate dehydrogenase (359 aa).

Positions 96, 106, 134, and 223 each coordinate substrate. Residues Asp-223, Asp-247, and Asp-251 each coordinate Mg(2+). 281–293 (GSAPDIAGQGIAN) contributes to the NAD(+) binding site.

Belongs to the isocitrate and isopropylmalate dehydrogenases family. LeuB type 1 subfamily. Homodimer. Mg(2+) serves as cofactor. Requires Mn(2+) as cofactor.

The protein localises to the cytoplasm. The catalysed reaction is (2R,3S)-3-isopropylmalate + NAD(+) = 4-methyl-2-oxopentanoate + CO2 + NADH. Its pathway is amino-acid biosynthesis; L-leucine biosynthesis; L-leucine from 3-methyl-2-oxobutanoate: step 3/4. In terms of biological role, catalyzes the oxidation of 3-carboxy-2-hydroxy-4-methylpentanoate (3-isopropylmalate) to 3-carboxy-4-methyl-2-oxopentanoate. The product decarboxylates to 4-methyl-2 oxopentanoate. This chain is 3-isopropylmalate dehydrogenase, found in Chromohalobacter salexigens (strain ATCC BAA-138 / DSM 3043 / CIP 106854 / NCIMB 13768 / 1H11).